The chain runs to 609 residues: UvrABC system protein C (609 aa).

In terms of domain architecture, GIY-YIG spans 16 to 94 (SSPGVYRMYD…IKQYMPKYNV (79 aa)). One can recognise a UVR domain in the interval 203-238 (HQVMSVLVGKMEQAASDMRYEQAALYRDQITALRRV).

Belongs to the UvrC family. Interacts with UvrB in an incision complex.

It localises to the cytoplasm. Functionally, the UvrABC repair system catalyzes the recognition and processing of DNA lesions. UvrC both incises the 5' and 3' sides of the lesion. The N-terminal half is responsible for the 3' incision and the C-terminal half is responsible for the 5' incision. The sequence is that of UvrABC system protein C from Shewanella halifaxensis (strain HAW-EB4).